We begin with the raw amino-acid sequence, 354 residues long: 3-dehydroquinate synthase (354 aa).

NAD(+) contacts are provided by residues 100–104 (GATGD), 124–125 (TT), lysine 136, lysine 145, and 163–166 (FLKT). Zn(2+) contacts are provided by glutamate 178, histidine 242, and histidine 256.

The protein belongs to the sugar phosphate cyclases superfamily. Dehydroquinate synthase family. The cofactor is NAD(+). Co(2+) is required as a cofactor. Zn(2+) serves as cofactor.

The protein localises to the cytoplasm. The enzyme catalyses 7-phospho-2-dehydro-3-deoxy-D-arabino-heptonate = 3-dehydroquinate + phosphate. It participates in metabolic intermediate biosynthesis; chorismate biosynthesis; chorismate from D-erythrose 4-phosphate and phosphoenolpyruvate: step 2/7. Functionally, catalyzes the conversion of 3-deoxy-D-arabino-heptulosonate 7-phosphate (DAHP) to dehydroquinate (DHQ). This is 3-dehydroquinate synthase from Staphylococcus aureus (strain Mu50 / ATCC 700699).